Consider the following 845-residue polypeptide: Extended synaptotagmin-2 (845 aa).

Over residues 1 to 17 the composition is skewed to gly residues; sequence MSSAGGEGPEAGPGRAG. A disordered region spans residues 1-26; that stretch reads MSSAGGEGPEAGPGRAGGRSEPEAPG. The Cytoplasmic segment spans residues 1–27; that stretch reads MSSAGGEGPEAGPGRAGGRSEPEAPGS. Residues 28–48 form a helical membrane-spanning segment; sequence ALSVDLPGLLGQLARSFALLL. Residues 49–51 lie on the Lumenal side of the membrane; it reads PVY. The helical transmembrane segment at 52-72 threads the bilayer; that stretch reads ALGYLGLSFSWVLLALGLLAW. Residues 73–845 are Cytoplasmic-facing; sequence CRRSRGLKAS…EDGTRPQVIT (773 aa). An SMP-LTD domain is found at 115–294; the sequence is DTERAEWLNK…LPNRITVPLV (180 aa). C2 domains lie at 293–413 and 442–563; these read LVSE…DEWF and VLAD…QLSN. Lysine 324, aspartate 325, aspartate 337, aspartate 384, glutamate 385, aspartate 386, aspartate 388, aspartate 390, and aspartate 391 together coordinate Ca(2+). The segment at 584-664 is disordered; it reads QERPPDYQHS…RDLGRSSSSL (81 aa). The span at 612–628 shows a compositional bias: polar residues; the sequence is SQMSASPGTGGANTAPS. Phosphoserine is present on residues serine 615 and serine 617. Position 629 is a phosphothreonine (threonine 629). Residues 634–645 show a composition bias toward basic and acidic residues; it reads VDDKPAMEEKPQ. Phosphoserine occurs at positions 660, 662, 663, 667, 679, 682, and 685. The region spanning 710–832 is the C2 3 domain; the sequence is PLGQIQLTIR…ELAKGWTQWY (123 aa). The segment at 757 to 764 is required for phosphatidylinositol 4,5-bisphosphate-dependent location at the cell membrane; that stretch reads KRRSGRRK.

This sequence belongs to the extended synaptotagmin family. Homodimer. Interacts with ESYT1 and ESYT3. Interacts with FGFR1 that has been activated by FGF1 binding. Interacts with the AP-2 complex; identified in a complex with the AP-2 complex and FGFR1.

Its subcellular location is the cell membrane. It localises to the endoplasmic reticulum membrane. Its function is as follows. Tethers the endoplasmic reticulum to the cell membrane and promotes the formation of appositions between the endoplasmic reticulum and the cell membrane. Binds glycerophospholipids in a barrel-like domain and may play a role in cellular lipid transport. Plays a role in FGF signaling via its role in the rapid internalization of FGFR1 that has been activated by FGF1 binding; this occurs most likely via the AP-2 complex. Promotes the localization of SACM1L at endoplasmic reticulum-plasma membrane contact sites (EPCS). The polypeptide is Extended synaptotagmin-2 (Esyt2) (Mus musculus (Mouse)).